Consider the following 714-residue polypeptide: BBSome complex member bbs-2 (714 aa).

Coiled coils occupy residues 332 to 361 and 597 to 627; these read IREFGQKKHNLMMELSNYEQEEQLADVEKD and MTEVRDRLTAELQERQAAVKEIIIRAEDSIA.

In terms of assembly, part of BBSome complex, that contains at least bbs-1, bbs-2, bbs-4, bbs-5, osm-12, bbs-8/ttc-8 and bbs-9. In terms of tissue distribution, expressed in ciliated cells including amphid and both inner and outer labial neurons of the head and in both phasmid neurons PHA and PHB in the tail at larval stages L1 and L2.

It localises to the cell projection. Its subcellular location is the cilium. The protein localises to the cytoplasm. It is found in the cytoskeleton. The protein resides in the cilium basal body. It localises to the cilium axoneme. Its function is as follows. Component of the BBSome complex. The BBSome complex is thought to function as a coat complex required for sorting of specific membrane proteins to the primary cilia. The BBSome complex is required for ciliogenesis but is dispensable for centriolar satellite function. Required for proper BBSome complex assembly and its ciliary localization. Required for cilia biogenesis and both the assembly and movement of intraflagellar transport proteins along the ciliary axoneme. The sequence is that of BBSome complex member bbs-2 from Caenorhabditis elegans.